Consider the following 79-residue polypeptide: UPF0337 protein YhjA (79 aa).

The segment at 1-30 (MALNDKLDATKDKVSGKVKETTGKVTGDEK) is disordered.

The protein belongs to the UPF0337 (CsbD) family.

In Lactococcus lactis subsp. lactis (strain IL1403) (Streptococcus lactis), this protein is UPF0337 protein YhjA (yhjA).